The following is a 519-amino-acid chain: MLNARFLVPRLLCLQGRTTSYSTAAALPNPIPNPEIRYNQLFINNEWHDAVSKKTFPTVNPTTGEVIGHVAEGDRADVDLAVRAAREAFRLGSPWRRMDASERGRLLNRLADLVERDRVYLASLETLDNGKPFQESYVLDLDEVIKVYRYLAGWADKWHGKTIPMDGEHFCFTRHEPVGVCGQIIPWNFPLVMQGWKLAPALATGNTVVMKVAEQTPLSALYLASLIKEAGFPPGVVNIITGYGPTAGAAIAQHMDVDKVAFTGSTEVGHLIQKAAGDSNLKRVTLELGGKSPSIVLADADMDHAVDQCHEALFFNMGQCCCAGSRTFVEESIYHEFLERTVEKAKKRKVGNPFELDTQQGPQVDKEQFEKILGYIRLGQKEGAKLLCGGERFGERGFFIKPTVFGNVQDDMRIAREEIFGPVQPLFKFKKIEEVIQRANNTRYGLAAAVFTRDLDKALYFSQALQAGTVWVNTYNIVTCHTPFGGFKESGNGRELGEDGLKAYTEVKTVTIKVSEKNS.

Residues 1 to 19 (MLNARFLVPRLLCLQGRTT) constitute a mitochondrion transit peptide. Lysine 53 bears the N6-acetyllysine mark. The residue at position 54 (lysine 54) is an N6-acetyllysine; alternate. At lysine 54 the chain carries N6-succinyllysine; alternate. 264–269 (GSTEVG) is an NAD(+) binding site. Glutamate 287 (proton acceptor) is an active-site residue. Catalysis depends on cysteine 321, which acts as the Nucleophile. Lysine 366, lysine 385, lysine 401, and lysine 428 each carry N6-acetyllysine; alternate. Lysine 366, lysine 385, lysine 401, and lysine 428 each carry N6-succinyllysine; alternate. N6-acetyllysine is present on lysine 431.

The protein belongs to the aldehyde dehydrogenase family. Homotetramer.

Its subcellular location is the mitochondrion matrix. It catalyses the reaction an aldehyde + NAD(+) + H2O = a carboxylate + NADH + 2 H(+). The protein operates within alcohol metabolism; ethanol degradation; acetate from ethanol: step 2/2. In terms of biological role, ALDHs play a major role in the detoxification of alcohol-derived acetaldehyde. They are involved in the metabolism of corticosteroids, biogenic amines, neurotransmitters, and lipid peroxidation. This chain is Aldehyde dehydrogenase X, mitochondrial (Aldh1b1), found in Rattus norvegicus (Rat).